Reading from the N-terminus, the 139-residue chain is Large ribosomal subunit protein uL16 (139 aa).

The segment covering 1 to 16 (MLIPRRVKHRKQHHPG) has biased composition (basic residues). The segment at 1-25 (MLIPRRVKHRKQHHPGRSGQATGGT) is disordered.

Belongs to the universal ribosomal protein uL16 family. In terms of assembly, part of the 50S ribosomal subunit.

In terms of biological role, binds 23S rRNA and is also seen to make contacts with the A and possibly P site tRNAs. This Leifsonia xyli subsp. xyli (strain CTCB07) protein is Large ribosomal subunit protein uL16.